A 112-amino-acid chain; its full sequence is Protein lin-52 homolog (112 aa).

This sequence belongs to the lin-52 family. As to quaternary structure, component of the DREAM complex.

The polypeptide is Protein lin-52 homolog (lin52) (Danio rerio (Zebrafish)).